A 330-amino-acid polypeptide reads, in one-letter code: N-acetyl-gamma-glutamyl-phosphate reductase (330 aa).

Cys155 is an active-site residue.

Belongs to the NAGSA dehydrogenase family. Type 1 subfamily.

It localises to the cytoplasm. The enzyme catalyses N-acetyl-L-glutamate 5-semialdehyde + phosphate + NADP(+) = N-acetyl-L-glutamyl 5-phosphate + NADPH + H(+). It functions in the pathway amino-acid biosynthesis; L-arginine biosynthesis; N(2)-acetyl-L-ornithine from L-glutamate: step 3/4. In terms of biological role, catalyzes the NADPH-dependent reduction of N-acetyl-5-glutamyl phosphate to yield N-acetyl-L-glutamate 5-semialdehyde. In Shewanella halifaxensis (strain HAW-EB4), this protein is N-acetyl-gamma-glutamyl-phosphate reductase.